Reading from the N-terminus, the 330-residue chain is Peptide transport system ATP-binding protein SapD (330 aa).

The 254-residue stretch at 6–259 (IRNLTIEFKT…PHHPYTQALI (254 aa)) folds into the ABC transporter domain. 40-47 (GESGSGKS) lines the ATP pocket.

This sequence belongs to the ABC transporter superfamily.

The protein resides in the cell inner membrane. Involved in a peptide intake transport system that plays a role in the resistance to antimicrobial peptides. The polypeptide is Peptide transport system ATP-binding protein SapD (sapD) (Escherichia coli O157:H7).